Here is a 210-residue protein sequence, read N- to C-terminus: Chaperone protein TorD (210 aa).

It belongs to the TorD/DmsD family. TorD subfamily.

It is found in the cytoplasm. In terms of biological role, involved in the biogenesis of TorA. Acts on TorA before the insertion of the molybdenum cofactor and, as a result, probably favors a conformation of the apoenzyme that is competent for acquiring the cofactor. This Salmonella agona (strain SL483) protein is Chaperone protein TorD.